The following is a 315-amino-acid chain: uncharacterized protein (315 aa).

It belongs to the carbohydrate kinase PfkB family.

This is an uncharacterized protein from Escherichia coli (strain K12).